The sequence spans 360 residues: Photosystem II protein D1 (360 aa).

A run of 3 helical transmembrane segments spans residues 29 to 46 (YIGW…TATS), 118 to 133 (HFLT…EWEL), and 142 to 156 (WISV…AAAA). His-118 is a chlorophyll a binding site. Residue Tyr-126 participates in pheophytin a binding. The [CaMn4O5] cluster site is built by Asp-170 and Glu-189. A helical membrane pass occupies residues 197–218 (FHQLGVAGVFGGSLFSAMHGSL). Chlorophyll a is bound at residue His-198. Residues His-215 and 264-265 (SF) each bind a quinone. Position 215 (His-215) interacts with Fe cation. His-272 contacts Fe cation. Residues 274-288 (FLGLWPVVGIWLTAL) traverse the membrane as a helical segment. The [CaMn4O5] cluster site is built by His-332, Glu-333, Asp-342, and Ala-344. Residues 345 to 360 (SGESLPVALTAPAVNG) constitute a propeptide that is removed on maturation.

Belongs to the reaction center PufL/M/PsbA/D family. In terms of assembly, PSII is composed of 1 copy each of membrane proteins PsbA, PsbB, PsbC, PsbD, PsbE, PsbF, PsbH, PsbI, PsbJ, PsbK, PsbL, PsbM, PsbT, PsbX, PsbY, PsbZ, Psb30/Ycf12, at least 3 peripheral proteins of the oxygen-evolving complex and a large number of cofactors. It forms dimeric complexes. The D1/D2 heterodimer binds P680, chlorophylls that are the primary electron donor of PSII, and subsequent electron acceptors. It shares a non-heme iron and each subunit binds pheophytin, quinone, additional chlorophylls, carotenoids and lipids. D1 provides most of the ligands for the Mn4-Ca-O5 cluster of the oxygen-evolving complex (OEC). There is also a Cl(-1) ion associated with D1 and D2, which is required for oxygen evolution. The PSII complex binds additional chlorophylls, carotenoids and specific lipids. is required as a cofactor. Post-translationally, tyr-161 forms a radical intermediate that is referred to as redox-active TyrZ, YZ or Y-Z. C-terminally processed by CTPA; processing is essential to allow assembly of the oxygen-evolving complex and thus photosynthetic growth.

Its subcellular location is the plastid. The protein localises to the chloroplast thylakoid membrane. The enzyme catalyses 2 a plastoquinone + 4 hnu + 2 H2O = 2 a plastoquinol + O2. Functionally, photosystem II (PSII) is a light-driven water:plastoquinone oxidoreductase that uses light energy to abstract electrons from H(2)O, generating O(2) and a proton gradient subsequently used for ATP formation. It consists of a core antenna complex that captures photons, and an electron transfer chain that converts photonic excitation into a charge separation. The D1/D2 (PsbA/PsbD) reaction center heterodimer binds P680, the primary electron donor of PSII as well as several subsequent electron acceptors. The chain is Photosystem II protein D1 from Pyropia yezoensis (Susabi-nori).